The sequence spans 106 residues: Acylphosphatase-2 (106 aa).

An Acylphosphatase-like domain is found at 16–106 (SVDYEVFGTV…LEYSDFSIRY (91 aa)). Active-site residues include R31 and N49. A Phosphoserine modification is found at S100.

Belongs to the acylphosphatase family.

The enzyme catalyses an acyl phosphate + H2O = a carboxylate + phosphate + H(+). This is Acylphosphatase-2 (Acyp2) from Mus musculus (Mouse).